The sequence spans 2195 residues: Genome polyprotein (2195 aa).

G2 is lipidated: N-myristoyl glycine; by host. Over 2 to 1505 (GAQVSTQKTG…HVSRAFICLQ (1504 aa)) the chain is Cytoplasmic. The segment at 567–583 (LLQGDVVEAVENAVARV) is amphipathic alpha-helix. Residues H882 and D900 each act as for protease 2A activity in the active site. C917 and C919 together coordinate Zn(2+). C971 acts as the For protease 2A activity in catalysis. Zn(2+)-binding residues include C977 and H979. The segment at 1111-1183 (NNGWLKKFTE…EQSAPSQSDQ (73 aa)) is membrane-binding. Residues 1111-1249 (NNGWLKKFTE…SPGAGKSVAT (139 aa)) are oligomerization. Positions 1132 to 1136 (SIKIQ) are RNA-binding. An SF3 helicase domain is found at 1215-1371 (EKKMSNYIQF…SMYSQNGKIN (157 aa)). Positions 1379, 1391, and 1396 each coordinate Zn(2+). Residues 1379–1396 (CDEECCPVNFKRCCPLVC) form a C4-type; degenerate zinc finger. Positions 1423–1430 (EYNHRHSV) are RNA-binding. The segment at 1434-1439 (LEALFQ) is oligomerization. The stretch at 1506 to 1521 (ALTTFVSVAGIIYIIY) is an intramembrane region. The Cytoplasmic portion of the chain corresponds to 1522–2195 (KLFAGFQGAY…TLRRKWLDSF (674 aa)). An O-(5'-phospho-RNA)-tyrosine modification is found at Y1531. The region spanning 1551–1729 (GPAFEFAVAM…FSAALLKHYF (179 aa)) is the Peptidase C3 domain. Residues H1590, E1621, and C1697 each act as for protease 3C activity in the active site. Residues 1960–2076 (GHLIAFDYSG…SYPWPIDASL (117 aa)) form the RdRp catalytic domain. D1966 and D2062 together coordinate Mg(2+).

The protein belongs to the picornaviruses polyprotein family. Interacts with capsid protein VP1 and capsid protein VP3 to form heterotrimeric protomers. In terms of assembly, interacts with capsid protein VP0, and capsid protein VP3 to form heterotrimeric protomers. Five protomers subsequently associate to form pentamers which serve as building blocks for the capsid. Interacts with capsid protein VP2, capsid protein VP3 and capsid protein VP4 following cleavage of capsid protein VP0. As to quaternary structure, interacts with capsid protein VP1 and capsid protein VP3 in the mature capsid. Interacts with capsid protein VP0 and capsid protein VP1 to form heterotrimeric protomers. Five protomers subsequently associate to form pentamers which serve as building blocks for the capsid. Interacts with capsid protein VP4 in the mature capsid. Interacts with protein 2C; this interaction may be important for virion morphogenesis. In terms of assembly, interacts with capsid protein VP1 and capsid protein VP3. As to quaternary structure, homodimer. Homohexamer; forms a hexameric ring structure with 6-fold symmetry characteristic of AAA+ ATPases. Interacts (via N-terminus) with host RTN3 (via reticulon domain); this interaction is important for viral replication. Interacts with capsid protein VP3; this interaction may be important for virion morphogenesis. In terms of assembly, interacts with protein 3CD. As to quaternary structure, homodimer. Interacts with host GBF1. Interacts (via GOLD domain) with host ACBD3 (via GOLD domain); this interaction allows the formation of a viral protein 3A/ACBD3 heterotetramer with a 2:2 stoichiometry, which will stimulate the recruitment of host PI4KB in order to synthesize PI4P at the viral RNA replication sites. Interacts with RNA-directed RNA polymerase. In terms of assembly, interacts with protein 3AB and with RNA-directed RNA polymerase. As to quaternary structure, interacts with Viral protein genome-linked and with protein 3CD. Mg(2+) is required as a cofactor. Specific enzymatic cleavages in vivo by the viral proteases yield processing intermediates and the mature proteins. In terms of processing, myristoylation is required for the formation of pentamers during virus assembly. Further assembly of 12 pentamers and a molecule of genomic RNA generates the provirion. Post-translationally, during virion maturation, immature virions are rendered infectious following cleavage of VP0 into VP4 and VP2. This maturation seems to be an autocatalytic event triggered by the presence of RNA in the capsid and it is followed by a conformational change infectious virion. Myristoylation is required during RNA encapsidation and formation of the mature virus particle. In terms of processing, VPg is uridylylated by the polymerase into VPg-pUpU. This acts as a nucleotide-peptide primer for the genomic RNA replication.

Its subcellular location is the virion. The protein localises to the host cytoplasm. It is found in the host cytoplasmic vesicle membrane. It localises to the host nucleus. The catalysed reaction is a ribonucleoside 5'-triphosphate + H2O = a ribonucleoside 5'-diphosphate + phosphate + H(+). The enzyme catalyses Selective cleavage of Tyr-|-Gly bond in the picornavirus polyprotein.. It catalyses the reaction RNA(n) + a ribonucleoside 5'-triphosphate = RNA(n+1) + diphosphate. It carries out the reaction Selective cleavage of Gln-|-Gly bond in the poliovirus polyprotein. In other picornavirus reactions Glu may be substituted for Gln, and Ser or Thr for Gly.. Its activity is regulated as follows. Replication or transcription is subject to high level of random mutations by the nucleotide analog ribavirin. Functionally, forms an icosahedral capsid of pseudo T=3 symmetry with capsid proteins VP2 and VP3. The capsid is 300 Angstroms in diameter, composed of 60 copies of each capsid protein and enclosing the viral positive strand RNA genome. Capsid protein VP1 mainly forms the vertices of the capsid. Capsid protein VP1 interacts with host cell receptor to provide virion attachment to target host cells. This attachment induces virion internalization. Tyrosine kinases are probably involved in the entry process. After binding to its receptor, the capsid undergoes conformational changes. Capsid protein VP1 N-terminus (that contains an amphipathic alpha-helix) and capsid protein VP4 are externalized. Together, they shape a pore in the host membrane through which viral genome is translocated to host cell cytoplasm. Forms an icosahedral capsid of pseudo T=3 symmetry with capsid proteins VP2 and VP3. The capsid is 300 Angstroms in diameter, composed of 60 copies of each capsid protein and enclosing the viral positive strand RNA genome. Its function is as follows. Lies on the inner surface of the capsid shell. After binding to the host receptor, the capsid undergoes conformational changes. Capsid protein VP4 is released, Capsid protein VP1 N-terminus is externalized, and together, they shape a pore in the host membrane through which the viral genome is translocated into the host cell cytoplasm. In terms of biological role, component of immature procapsids, which is cleaved into capsid proteins VP4 and VP2 after maturation. Allows the capsid to remain inactive before the maturation step. Functionally, cysteine protease that cleaves viral polyprotein and specific host proteins. It is responsible for the autocatalytic cleavage between the P1 and P2 regions, which is the first cleavage occurring in the polyprotein. Also cleaves the host translation initiation factor EIF4G1, in order to shut down the capped cellular mRNA translation. Inhibits the host nucleus-cytoplasm protein and RNA trafficking by cleaving host members of the nuclear pores. Counteracts stress granule formation probably by antagonizing its assembly or promoting its dissassembly. Plays an essential role in the virus replication cycle by acting as a viroporin. Creates a pore in the host endoplasmic reticulum and as a consequence releases Ca2+ in the cytoplasm of infected cell. In turn, high levels of cytoplasmic calcium may trigger membrane trafficking and transport of viral ER-associated proteins to viroplasms, sites of viral genome replication. Its function is as follows. Induces and associates with structural rearrangements of intracellular membranes. Displays RNA-binding, nucleotide binding and NTPase activities. May play a role in virion morphogenesis and viral RNA encapsidation by interacting with the capsid protein VP3. In terms of biological role, localizes the viral replication complex to the surface of membranous vesicles. Together with protein 3CD binds the Cis-Active RNA Element (CRE) which is involved in RNA synthesis initiation. Acts as a cofactor to stimulate the activity of 3D polymerase, maybe through a nucleid acid chaperone activity. Functionally, localizes the viral replication complex to the surface of membranous vesicles. It inhibits host cell endoplasmic reticulum-to-Golgi apparatus transport and causes the disassembly of the Golgi complex, possibly through GBF1 interaction. This would result in depletion of MHC, trail receptors and IFN receptors at the host cell surface. Plays an essential role in viral RNA replication by recruiting ACBD3 and PI4KB at the viral replication sites, thereby allowing the formation of the rearranged membranous structures where viral replication takes place. Acts as a primer for viral RNA replication and remains covalently bound to viral genomic RNA. VPg is uridylylated prior to priming replication into VPg-pUpU. The oriI viral genomic sequence may act as a template for this. The VPg-pUpU is then used as primer on the genomic RNA poly(A) by the RNA-dependent RNA polymerase to replicate the viral genome. During genome replication, the VPg-RNA linkage is removed by the host TDP2, thereby accelerating replication. During the late stage of the replication cycle, host TDP2 is excluded from sites of viral RNA synthesis and encapsidation, allowing for the generation of progeny virions. Its function is as follows. Involved in the viral replication complex and viral polypeptide maturation. It exhibits protease activity with a specificity and catalytic efficiency that is different from protease 3C. Protein 3CD lacks polymerase activity. The 3C domain in the context of protein 3CD may have an RNA binding activity. Protein 3CD binds to the 5'UTR of the viral genome. In terms of biological role, replicates the viral genomic RNA on the surface of intracellular membranes. May form linear arrays of subunits that propagate along a strong head-to-tail interaction called interface-I. Covalently attaches UMP to a tyrosine of VPg, which is used to prime RNA synthesis. The positive stranded RNA genome is first replicated at virus induced membranous vesicles, creating a dsRNA genomic replication form. This dsRNA is then used as template to synthesize positive stranded RNA genomes. ss(+)RNA genomes are either translated, replicated or encapsidated. Functionally, major viral protease that mediates proteolytic processing of the polyprotein. Cleaves host EIF5B, contributing to host translation shutoff. Also cleaves host PABPC1, contributing to host translation shutoff. Cleaves host NLRP1, triggers host N-glycine-mediated degradation of the autoinhibitory NLRP1 N-terminal fragment. In Echovirus 11 (strain Gregory), this protein is Genome polyprotein.